Reading from the N-terminus, the 419-residue chain is Pyrrolysine--tRNA ligase (419 aa).

The disordered stretch occupies residues 100–157 (APKVKKAMPKSVSRAPKPLENSVSAKASTNTSRSVPSPAKSTPNSSVPASAPAPSLTR). A compositionally biased stretch (polar residues) spans 120–141 (NSVSAKASTNTSRSVPSPAKST). Over residues 142–154 (PNSSVPASAPAPS) the composition is skewed to low complexity.

The protein belongs to the class-II aminoacyl-tRNA synthetase family.

The protein resides in the cytoplasm. The catalysed reaction is tRNA(Pyl) + L-pyrrolysine + ATP = L-pyrrolysyl-tRNA(Pyl) + AMP + diphosphate. Its function is as follows. Catalyzes the attachment of pyrrolysine to tRNA(Pyl). Pyrrolysine is a lysine derivative encoded by the termination codon UAG. The protein is Pyrrolysine--tRNA ligase (pylS) of Methanosarcina barkeri.